The following is a 689-amino-acid chain: Glycine--tRNA ligase beta subunit (689 aa).

Belongs to the class-II aminoacyl-tRNA synthetase family. As to quaternary structure, tetramer of two alpha and two beta subunits.

Its subcellular location is the cytoplasm. It carries out the reaction tRNA(Gly) + glycine + ATP = glycyl-tRNA(Gly) + AMP + diphosphate. The sequence is that of Glycine--tRNA ligase beta subunit from Mannheimia succiniciproducens (strain KCTC 0769BP / MBEL55E).